Here is a 599-residue protein sequence, read N- to C-terminus: Aspartate--tRNA(Asp/Asn) ligase (599 aa).

Residue glutamate 172 coordinates L-aspartate. Positions 196-199 are aspartate; that stretch reads QLFK. Residue arginine 218 participates in L-aspartate binding. ATP-binding positions include 218 to 220 and glutamine 227; that span reads RDE. Histidine 454 is a binding site for L-aspartate. Glutamate 488 contributes to the ATP binding site. Position 495 (arginine 495) interacts with L-aspartate. 540–543 contributes to the ATP binding site; it reads GLDR.

Belongs to the class-II aminoacyl-tRNA synthetase family. Type 1 subfamily. As to quaternary structure, homodimer.

It localises to the cytoplasm. It catalyses the reaction tRNA(Asx) + L-aspartate + ATP = L-aspartyl-tRNA(Asx) + AMP + diphosphate. Its function is as follows. Aspartyl-tRNA synthetase with relaxed tRNA specificity since it is able to aspartylate not only its cognate tRNA(Asp) but also tRNA(Asn). Reaction proceeds in two steps: L-aspartate is first activated by ATP to form Asp-AMP and then transferred to the acceptor end of tRNA(Asp/Asn). This Methylibium petroleiphilum (strain ATCC BAA-1232 / LMG 22953 / PM1) protein is Aspartate--tRNA(Asp/Asn) ligase.